An 89-amino-acid chain; its full sequence is Small ribosomal subunit protein bS20 (89 aa).

Residues 1 to 12 (MANHKSAIKRHR) show a composition bias toward basic residues. A disordered region spans residues 1–26 (MANHKSAIKRHRQSVERAGRNRAART).

The protein belongs to the bacterial ribosomal protein bS20 family.

Functionally, binds directly to 16S ribosomal RNA. The polypeptide is Small ribosomal subunit protein bS20 (Desulfovibrio desulfuricans (strain ATCC 27774 / DSM 6949 / MB)).